Reading from the N-terminus, the 135-residue chain is MTLDVSIIIPERVFWEKRVEEIILPTLSGQMGVLKDHIPILTGLDIGIILVRQKSSSDWTSLVVTGGFALINSNNVTILVNEAEFGSEINVEQAQISYNSSKHALEMNKDIKRKFELTLNLKKARARFQVTQLKK.

The protein belongs to the ATPase epsilon chain family. In terms of assembly, F-type ATPases have 2 components, CF(1) - the catalytic core - and CF(0) - the membrane proton channel. CF(1) has five subunits: alpha(3), beta(3), gamma(1), delta(1), epsilon(1). CF(0) has three main subunits: a, b and c.

The protein resides in the plastid. Its subcellular location is the chloroplast thylakoid membrane. Its function is as follows. Produces ATP from ADP in the presence of a proton gradient across the membrane. This chain is ATP synthase epsilon chain, chloroplastic, found in Euglena gracilis.